The following is a 184-amino-acid chain: UPF0398 protein BALH_1408 (184 aa).

This sequence belongs to the UPF0398 family.

The polypeptide is UPF0398 protein BALH_1408 (Bacillus thuringiensis (strain Al Hakam)).